Consider the following 363-residue polypeptide: uncharacterized protein (363 aa).

Positions 198, 225, 246, and 291 each coordinate S-adenosyl-L-methionine. Residue Cys-318 is the Nucleophile of the active site.

The protein belongs to the class I-like SAM-binding methyltransferase superfamily. RNA M5U methyltransferase family.

This is an uncharacterized protein from Mycoplasma mobile (strain ATCC 43663 / 163K / NCTC 11711) (Mesomycoplasma mobile).